The chain runs to 236 residues: Ribose-5-phosphate isomerase A (236 aa).

Substrate is bound by residues 31 to 34, 88 to 91, and 101 to 104; these read TGST, DGAD, and KGGG. Catalysis depends on E110, which acts as the Proton acceptor. K128 is a substrate binding site.

Belongs to the ribose 5-phosphate isomerase family. As to quaternary structure, homodimer.

It carries out the reaction aldehydo-D-ribose 5-phosphate = D-ribulose 5-phosphate. It participates in carbohydrate degradation; pentose phosphate pathway; D-ribose 5-phosphate from D-ribulose 5-phosphate (non-oxidative stage): step 1/1. Its function is as follows. Catalyzes the reversible conversion of ribose-5-phosphate to ribulose 5-phosphate. The chain is Ribose-5-phosphate isomerase A from Thermosynechococcus vestitus (strain NIES-2133 / IAM M-273 / BP-1).